Consider the following 186-residue polypeptide: Dirigent protein 7 (186 aa).

An N-terminal signal peptide occupies residues 1 to 21 (MAKLILIIVTQILLIAAVVSA). 3 N-linked (GlcNAc...) asparagine glycosylation sites follow: asparagine 70, asparagine 91, and asparagine 126.

Belongs to the plant dirigent protein family. In terms of assembly, homodimer.

The protein localises to the secreted. It is found in the extracellular space. It localises to the apoplast. Dirigent proteins impart stereoselectivity on the phenoxy radical-coupling reaction, yielding optically active lignans from two molecules of coniferyl alcohol in the biosynthesis of lignans, flavonolignans, and alkaloids and thus plays a central role in plant secondary metabolism. The sequence is that of Dirigent protein 7 (DIR7) from Arabidopsis thaliana (Mouse-ear cress).